Here is a 227-residue protein sequence, read N- to C-terminus: 2,3-bisphosphoglycerate-dependent phosphoglycerate mutase (227 aa).

Substrate contacts are provided by residues Arg7–Asn14, Thr20–Gly21, Arg59, Glu86–Tyr89, Lys97, Arg113–Arg114, and Gly182–Asn183. The Tele-phosphohistidine intermediate role is filled by His8. Catalysis depends on Glu86, which acts as the Proton donor/acceptor.

Belongs to the phosphoglycerate mutase family. BPG-dependent PGAM subfamily. As to quaternary structure, homodimer.

The catalysed reaction is (2R)-2-phosphoglycerate = (2R)-3-phosphoglycerate. Its pathway is carbohydrate degradation; glycolysis; pyruvate from D-glyceraldehyde 3-phosphate: step 3/5. In terms of biological role, catalyzes the interconversion of 2-phosphoglycerate and 3-phosphoglycerate. The polypeptide is 2,3-bisphosphoglycerate-dependent phosphoglycerate mutase (Histophilus somni (strain 129Pt) (Haemophilus somnus)).